The sequence spans 151 residues: Histone H2A.2.2 (151 aa).

M1 carries the N-acetylmethionine modification. The tract at residues 129–151 is disordered; sequence EKAEKAGTKAKSPKKATKSPKKA. Positions 139–151 are enriched in basic residues; that stretch reads KSPKKATKSPKKA. Short sequence motifs (SPKK motif) lie at residues 140–143 and 147–150; these read SPKK.

This sequence belongs to the histone H2A family. The nucleosome is a histone octamer containing two molecules each of H2A, H2B, H3 and H4 assembled in one H3-H4 heterotetramer and two H2A-H2B heterodimers. The octamer wraps approximately 147 bp of DNA. Phosphorylated within its C-terminal part, probably at the SPKK motifs.

It is found in the nucleus. The protein localises to the chromosome. Core component of nucleosome. Nucleosomes wrap and compact DNA into chromatin, limiting DNA accessibility to the cellular machineries which require DNA as a template. Histones thereby play a central role in transcription regulation, DNA repair, DNA replication and chromosomal stability. DNA accessibility is regulated via a complex set of post-translational modifications of histones, also called histone code, and nucleosome remodeling. In Triticum aestivum (Wheat), this protein is Histone H2A.2.2.